Consider the following 157-residue polypeptide: Class-10 pathogenesis-related protein 1 (157 aa).

This sequence belongs to the BetVI family. Expressed in roots. Detected in nodules and leaves, but not in stems and flowers.

This is Class-10 pathogenesis-related protein 1 (PR10-1) from Medicago truncatula (Barrel medic).